We begin with the raw amino-acid sequence, 324 residues long: Archaeosine synthase subunit beta (324 aa).

Residues 12 to 254 (GKPGTALFII…LIWAKRKFPN (243 aa)) form the Radical SAM core domain. 3 residues coordinate [4Fe-4S] cluster: C27, C36, and C39.

This sequence belongs to the radical SAM superfamily. RaSEA family. In terms of assembly, forms a robust complex with the archaeosine synthase alpha subunit ArcS, likely an alpha(2)beta(2) heterotetrameric structure. The cofactor is [4Fe-4S] cluster.

It catalyses the reaction 7-N-[(5S)-5-amino-5-carboxypentyl]formamidino-7-deazaguanosine(15) in tRNA + S-adenosyl-L-methionine = archaeosine(15) in tRNA + L-1-piperideine-6-carboxylate + 5'-deoxyadenosine + L-methionine + 2 H(+). It participates in tRNA modification; archaeosine-tRNA biosynthesis. Radical SAM enzyme involved in the synthesis of archaeosine, a modified nucleoside present in the dihydrouridine loop (D-loop) of archaeal tRNAs. Catalyzes the cleavage of the C(epsilon)-N bond of the lysine moiety of q0kN15-tRNA, leading to the formation of archaeosine at position 15 in tRNAs. The polypeptide is Archaeosine synthase subunit beta (Thermococcus kodakarensis (strain ATCC BAA-918 / JCM 12380 / KOD1) (Pyrococcus kodakaraensis (strain KOD1))).